The following is a 220-amino-acid chain: uncharacterized protein (220 aa).

The next 4 membrane-spanning stretches (helical) occupy residues 61–81 (LISV…SFFG), 85–105 (SVMF…YGAF), 115–135 (FVII…ILLL), and 150–170 (LPLE…SLLL).

The protein localises to the membrane. This is an uncharacterized protein from Caenorhabditis elegans.